The primary structure comprises 400 residues: Probable protein phosphatase 2C 64 (400 aa).

The 309-residue stretch at 47–355 (DFSMAVVQAN…DDITVIVVFF (309 aa)) folds into the PPM-type phosphatase domain. Ser-75 carries the phosphoserine modification. Residues Asp-86, Gly-87, Asp-287, and Asp-346 each contribute to the Mn(2+) site.

This sequence belongs to the PP2C family. In terms of assembly, interacts with SAUR19. Requires Mg(2+) as cofactor. The cofactor is Mn(2+).

It catalyses the reaction O-phospho-L-seryl-[protein] + H2O = L-seryl-[protein] + phosphate. The catalysed reaction is O-phospho-L-threonyl-[protein] + H2O = L-threonyl-[protein] + phosphate. Functionally, dephosphorylates and represses plasma membrane H(+)-ATPases (PM H(+)-ATPases, e.g. AHA1 and AHA2), thus influencing negatively plant growth and fitness. This Arabidopsis thaliana (Mouse-ear cress) protein is Probable protein phosphatase 2C 64.